A 964-amino-acid chain; its full sequence is Protein translocase subunit SecA (964 aa).

ATP is bound by residues Gln-86, 104 to 108 (GEGKT), and Asp-494. Residues 846–964 (ETAESADTIA…YKMCHGQNEA (119 aa)) form a disordered region. The segment covering 871-882 (AEGEVEEEDEDT) has biased composition (acidic residues). The segment covering 887–900 (AIAESAAASEAGES) has biased composition (low complexity). Zn(2+)-binding residues include Cys-947, Cys-949, Cys-958, and His-959.

Belongs to the SecA family. As to quaternary structure, monomer and homodimer. Part of the essential Sec protein translocation apparatus which comprises SecA, SecYEG and auxiliary proteins SecDF. Other proteins may also be involved. Requires Zn(2+) as cofactor.

Its subcellular location is the cell membrane. The protein localises to the cytoplasm. It carries out the reaction ATP + H2O + cellular proteinSide 1 = ADP + phosphate + cellular proteinSide 2.. Part of the Sec protein translocase complex. Interacts with the SecYEG preprotein conducting channel. Has a central role in coupling the hydrolysis of ATP to the transfer of proteins into and across the cell membrane, serving as an ATP-driven molecular motor driving the stepwise translocation of polypeptide chains across the membrane. The sequence is that of Protein translocase subunit SecA from Bifidobacterium longum subsp. infantis (strain ATCC 15697 / DSM 20088 / JCM 1222 / NCTC 11817 / S12).